The chain runs to 233 residues: Enolase-phosphatase E1 (233 aa).

Mg(2+) contacts are provided by aspartate 6 and glutamate 8. Substrate contacts are provided by residues 128–129 (SS) and lysine 163. A Mg(2+)-binding site is contributed by aspartate 188.

It belongs to the HAD-like hydrolase superfamily. MasA/MtnC family. Monomer. Mg(2+) serves as cofactor.

The protein localises to the cytoplasm. Its subcellular location is the nucleus. It catalyses the reaction 5-methylsulfanyl-2,3-dioxopentyl phosphate + H2O = 1,2-dihydroxy-5-(methylsulfanyl)pent-1-en-3-one + phosphate. The protein operates within amino-acid biosynthesis; L-methionine biosynthesis via salvage pathway; L-methionine from S-methyl-5-thio-alpha-D-ribose 1-phosphate: step 3/6. It functions in the pathway amino-acid biosynthesis; L-methionine biosynthesis via salvage pathway; L-methionine from S-methyl-5-thio-alpha-D-ribose 1-phosphate: step 4/6. Its function is as follows. Bifunctional enzyme that catalyzes the enolization of 2,3-diketo-5-methylthiopentyl-1-phosphate (DK-MTP-1-P) into the intermediate 2-hydroxy-3-keto-5-methylthiopentenyl-1-phosphate (HK-MTPenyl-1-P), which is then dephosphorylated to form the acireductone 1,2-dihydroxy-3-keto-5-methylthiopentene (DHK-MTPene). This Yarrowia lipolytica (strain CLIB 122 / E 150) (Yeast) protein is Enolase-phosphatase E1.